Reading from the N-terminus, the 552-residue chain is Hydroxylamine reductase (552 aa).

The [2Fe-2S] cluster site is built by C5, C8, C20, and C27. Hybrid [4Fe-2O-2S] cluster is bound by residues H251, E275, C319, C407, C435, C460, E494, and K496. Position 407 is a cysteine persulfide (C407).

Belongs to the HCP family. [2Fe-2S] cluster is required as a cofactor. Hybrid [4Fe-2O-2S] cluster serves as cofactor.

It is found in the cytoplasm. The enzyme catalyses A + NH4(+) + H2O = hydroxylamine + AH2 + H(+). In terms of biological role, catalyzes the reduction of hydroxylamine to form NH(3) and H(2)O. This Escherichia coli (strain UTI89 / UPEC) protein is Hydroxylamine reductase.